A 105-amino-acid chain; its full sequence is Large ribosomal subunit protein bL21 (105 aa).

Belongs to the bacterial ribosomal protein bL21 family. As to quaternary structure, part of the 50S ribosomal subunit. Contacts protein L20.

This protein binds to 23S rRNA in the presence of protein L20. The chain is Large ribosomal subunit protein bL21 from Rhizobium johnstonii (strain DSM 114642 / LMG 32736 / 3841) (Rhizobium leguminosarum bv. viciae).